The sequence spans 423 residues: Mannose-6-phosphate isomerase (423 aa).

Residue Ala-2 is modified to N-acetylalanine. A phosphoserine mark is found at Ser-102 and Ser-108. Residues Gln-110, His-112, Glu-137, and His-276 each contribute to the Zn(2+) site. The active site involves Arg-295.

This sequence belongs to the mannose-6-phosphate isomerase type 1 family. The cofactor is Zn(2+). As to expression, expressed in all tissues, but more abundant in heart, brain and skeletal muscle.

Its subcellular location is the cytoplasm. It carries out the reaction D-mannose 6-phosphate = D-fructose 6-phosphate. It participates in nucleotide-sugar biosynthesis; GDP-alpha-D-mannose biosynthesis; alpha-D-mannose 1-phosphate from D-fructose 6-phosphate: step 1/2. Its function is as follows. Isomerase that catalyzes the interconversion of fructose-6-P and mannose-6-P and has a critical role in the supply of D-mannose derivatives required for many eukaryotic glycosylation reactions. The sequence is that of Mannose-6-phosphate isomerase from Homo sapiens (Human).